Reading from the N-terminus, the 418-residue chain is Methionine aminopeptidase 2 (418 aa).

The segment at 18 to 49 is disordered; sequence VSEPAAVDDSEVTEDATVQDKKKKKKKKKKKG. The span at 38-49 shows a compositional bias: basic residues; the sequence is KKKKKKKKKKKG. Position 172 (His172) interacts with substrate. Residues Asp192, Asp203, and His272 each contribute to the a divalent metal cation site. His280 is a binding site for substrate. Residues Glu305 and Glu399 each coordinate a divalent metal cation.

The protein belongs to the peptidase M24A family. Methionine aminopeptidase eukaryotic type 2 subfamily. The cofactor is Co(2+). It depends on Zn(2+) as a cofactor. Requires Mn(2+) as cofactor. Fe(2+) is required as a cofactor.

The protein resides in the cytoplasm. It carries out the reaction Release of N-terminal amino acids, preferentially methionine, from peptides and arylamides.. Its function is as follows. Cotranslationally removes the N-terminal methionine from nascent proteins. The N-terminal methionine is often cleaved when the second residue in the primary sequence is small and uncharged (Met-Ala-, Cys, Gly, Pro, Ser, Thr, or Val). This is Methionine aminopeptidase 2 from Kluyveromyces lactis (strain ATCC 8585 / CBS 2359 / DSM 70799 / NBRC 1267 / NRRL Y-1140 / WM37) (Yeast).